The following is a 273-amino-acid chain: Elongation factor Ts (273 aa).

The segment at Thr-79–Val-82 is involved in Mg(2+) ion dislocation from EF-Tu.

This sequence belongs to the EF-Ts family.

The protein resides in the cytoplasm. Functionally, associates with the EF-Tu.GDP complex and induces the exchange of GDP to GTP. It remains bound to the aminoacyl-tRNA.EF-Tu.GTP complex up to the GTP hydrolysis stage on the ribosome. In Hydrogenobaculum sp. (strain Y04AAS1), this protein is Elongation factor Ts.